The chain runs to 1011 residues: Probable beta-galactosidase E (1011 aa).

Positions 1-19 (MKSLLKRLIALAAAYSVAA) are cleaved as a signal peptide. Positions 92, 136, 137, 138, and 195 each coordinate substrate. The active-site Proton donor is the Glu-196. An N-linked (GlcNAc...) asparagine glycan is attached at Asn-202. Tyr-261 serves as a coordination point for substrate. Cysteines 267 and 316 form a disulfide. Glu-299 functions as the Nucleophile in the catalytic mechanism. Tyr-365 contacts substrate. Residues Asn-406, Asn-423, Asn-446, Asn-455, Asn-588, Asn-622, Asn-704, Asn-745, Asn-759, Asn-772, Asn-778, and Asn-913 are each glycosylated (N-linked (GlcNAc...) asparagine).

The protein belongs to the glycosyl hydrolase 35 family.

The protein localises to the secreted. It catalyses the reaction Hydrolysis of terminal non-reducing beta-D-galactose residues in beta-D-galactosides.. Functionally, cleaves beta-linked terminal galactosyl residues from gangliosides, glycoproteins, and glycosaminoglycans. This Aspergillus fumigatus (strain CBS 144.89 / FGSC A1163 / CEA10) (Neosartorya fumigata) protein is Probable beta-galactosidase E (lacE).